The chain runs to 194 residues: Peptidyl-tRNA hydrolase (194 aa).

A tRNA-binding site is contributed by Y16. H21 functions as the Proton acceptor in the catalytic mechanism. TRNA contacts are provided by F67, N69, and N115.

The protein belongs to the PTH family. As to quaternary structure, monomer.

It localises to the cytoplasm. The catalysed reaction is an N-acyl-L-alpha-aminoacyl-tRNA + H2O = an N-acyl-L-amino acid + a tRNA + H(+). Its function is as follows. Hydrolyzes ribosome-free peptidyl-tRNAs (with 1 or more amino acids incorporated), which drop off the ribosome during protein synthesis, or as a result of ribosome stalling. Functionally, catalyzes the release of premature peptidyl moieties from peptidyl-tRNA molecules trapped in stalled 50S ribosomal subunits, and thus maintains levels of free tRNAs and 50S ribosomes. This is Peptidyl-tRNA hydrolase from Salmonella paratyphi B (strain ATCC BAA-1250 / SPB7).